A 189-amino-acid polypeptide reads, in one-letter code: uncharacterized protein (189 aa).

This is an uncharacterized protein from Saccharomyces cerevisiae (strain ATCC 204508 / S288c) (Baker's yeast).